The following is a 503-amino-acid chain: Probable cytosol aminopeptidase (503 aa).

2 residues coordinate Mn(2+): Lys271 and Asp276. Residue Lys283 is part of the active site. Asp294, Asp353, and Glu355 together coordinate Mn(2+). Residue Arg357 is part of the active site.

The protein belongs to the peptidase M17 family. Mn(2+) serves as cofactor.

The protein localises to the cytoplasm. It catalyses the reaction Release of an N-terminal amino acid, Xaa-|-Yaa-, in which Xaa is preferably Leu, but may be other amino acids including Pro although not Arg or Lys, and Yaa may be Pro. Amino acid amides and methyl esters are also readily hydrolyzed, but rates on arylamides are exceedingly low.. The catalysed reaction is Release of an N-terminal amino acid, preferentially leucine, but not glutamic or aspartic acids.. Presumably involved in the processing and regular turnover of intracellular proteins. Catalyzes the removal of unsubstituted N-terminal amino acids from various peptides. The chain is Probable cytosol aminopeptidase from Chlorobium phaeobacteroides (strain DSM 266 / SMG 266 / 2430).